We begin with the raw amino-acid sequence, 932 residues long: Protein translocase subunit SecA (932 aa).

ATP contacts are provided by residues Gln87, 105-109 (GEGKT), and Asp515. Residues Cys916, Cys918, Cys927, and His928 each coordinate Zn(2+).

This sequence belongs to the SecA family. Monomer and homodimer. Part of the essential Sec protein translocation apparatus which comprises SecA, SecYEG and auxiliary proteins SecDF-YajC and YidC. Requires Zn(2+) as cofactor.

Its subcellular location is the cell inner membrane. The protein localises to the cytoplasm. The catalysed reaction is ATP + H2O + cellular proteinSide 1 = ADP + phosphate + cellular proteinSide 2.. Part of the Sec protein translocase complex. Interacts with the SecYEG preprotein conducting channel. Has a central role in coupling the hydrolysis of ATP to the transfer of proteins into and across the cell membrane, serving both as a receptor for the preprotein-SecB complex and as an ATP-driven molecular motor driving the stepwise translocation of polypeptide chains across the membrane. The sequence is that of Protein translocase subunit SecA from Burkholderia orbicola (strain AU 1054).